Reading from the N-terminus, the 492-residue chain is Excitatory amino acid transporter (492 aa).

Residues 1-7 lie on the Cytoplasmic side of the membrane; sequence MVSWIRK. A run of 3 helical transmembrane segments spans residues 8–28, 47–67, and 85–105; these read NLLLVLTVSSVVLGALCGFLL, LLMHMLKMMILPLIMSSLISG, and TYYMFTTAVAVVTGIFLVLVI. Over 106 to 191 the chain is Extracellular; sequence HPGDPTIKKE…VKASVEYTSG (86 aa). N-linked (GlcNAc...) asparagine glycosylation is found at Asn-166 and Asn-176. The next 5 membrane-spanning stretches (helical) occupy residues 192-212, 228-248, 270-290, 358-378, and 389-409; these read MNVLGVIVFCIAIGISLSQLG, VIMKLVMTVMWYSPFGILCLI, VTVLSGLAIHSLISLPLIFFV, AVAAIFIAQINGVHLSFGQVV, and IGAASVPSAGLVTMLLVLTAV.

This sequence belongs to the dicarboxylate/amino acid:cation symporter (DAACS) (TC 2.A.23) family.

It is found in the membrane. In terms of biological role, transports L-glutamate and also L- and D-aspartate. Essential for terminating the postsynaptic action of glutamate by rapidly removing released glutamate from the synaptic cleft. Acts as a symport by cotransporting sodium. The polypeptide is Excitatory amino acid transporter (GLT-1) (Onchocerca volvulus).